We begin with the raw amino-acid sequence, 299 residues long: Protease HtpX homolog (299 aa).

The next 2 membrane-spanning stretches (helical) occupy residues 5–25 and 44–64; these read IFLFILTNILVITTIGIVLSV and MVALLVFSAVVGFVGSFMSLA. Position 155 (His-155) interacts with Zn(2+). Glu-156 is a catalytic residue. His-159 contributes to the Zn(2+) binding site. Helical transmembrane passes span 170–190 and 205–225; these read LLQGIVNTFVVFLSRIAAWIA and FIAVIVFQIIFSVLGSLVVFA. A Zn(2+)-binding site is contributed by Glu-231.

This sequence belongs to the peptidase M48B family. Zn(2+) serves as cofactor.

The protein localises to the cell membrane. The protein is Protease HtpX homolog of Bacillus pumilus (strain SAFR-032).